We begin with the raw amino-acid sequence, 387 residues long: Phosphoglycerate kinase (387 aa).

Residues 21-23, Arg36, 59-62, Arg113, and Arg146 each bind substrate; these read DLN and HLGR. ATP-binding positions include Lys197, Glu314, and 340-343; that span reads GGDT.

The protein belongs to the phosphoglycerate kinase family. Monomer.

The protein resides in the cytoplasm. It catalyses the reaction (2R)-3-phosphoglycerate + ATP = (2R)-3-phospho-glyceroyl phosphate + ADP. Its pathway is carbohydrate degradation; glycolysis; pyruvate from D-glyceraldehyde 3-phosphate: step 2/5. The sequence is that of Phosphoglycerate kinase from Aeromonas salmonicida (strain A449).